Consider the following 491-residue polypeptide: MAGGRRGANRTTYCRSPLSNDTGSVGNGNHSTSSPVTGVRSRTRNGSGTGMSSPPLATQTVVPLKHCKIPELSMDKNVLFELHLFACHLIALFVHYVNIYKTVWWYPPSHPPSHTSLNFHLIDYNMLVFTVIVLARRLIAAIVKEASQSGKLSFPHSVFLVTARFAVLTLAGWSLCRSLIYLFKTYSVLSLLFLCYPFGMYIPFFRLSCDFRRAGSMSPLSGIGSKDVGAAALGRGGRDYLSVLKETWKQHTSQLYSAQPMPTHACCLSPDLIRKEVEYLKMDFNWRMKEVLVSSMLSAYYVAFVPVWFVKSTQYVDKRWSCELFILVSVSTSVILMRHLLPPRYCDLLHKAAAHLGCWQKVDPSLCSNVLQHIWTEEYMWPQGVLVKHSKNVYKAMGHYNVAVPSDVSHYRFYFFFNKPLRILNILIILEGAMIFYQLYSLMCSEKWHQTISLALILFSNYYAFFKLLRDRIVLGKAYSYSASASNQKVS.

A disordered region spans residues 1-56 (MAGGRRGANRTTYCRSPLSNDTGSVGNGNHSTSSPVTGVRSRTRNGSGTGMSSPPL). Residues Asn9, Asn20, Asn29, and Asn45 are each glycosylated (N-linked (GlcNAc...) asparagine). Polar residues-rich tracts occupy residues 9-36 (NRTT…SSPV) and 44-56 (RNGS…SPPL). Transmembrane regions (helical) follow at residues 79–99 (LFEL…YVNI), 115–135 (TSLN…IVLA), 152–172 (LSFP…TLAG), 185–205 (TYSV…IPFF), 290–310 (EVLV…VWFV), 322–342 (CELF…HLLP), 423–443 (ILNI…YSLM), and 449–469 (HQTI…FKLL).

The protein belongs to the TMEM39 family. In terms of tissue distribution, expressed in the ovary, followed by the intestine and brain.

It is found in the endoplasmic reticulum membrane. In terms of biological role, may protect the cells against DNA damage caused by exposure to the cold-warming stress and facilitates tissue damage repair during the recovery phase. The sequence is that of Transmembrane protein 39B from Danio rerio (Zebrafish).